The sequence spans 356 residues: Kinetochore-associated protein DSN1 homolog (356 aa).

The segment at 1–28 is disordered; sequence MTSVTRSEIIDEKGPVMSKTHDHQLESS. Residues 8-25 show a composition bias toward basic and acidic residues; that stretch reads EIIDEKGPVMSKTHDHQL. Residues S28, S30, S58, S77, S81, S109, and S125 each carry the phosphoserine modification. Residues 73-93 form a disordered region; sequence LQSKSLHLSPQEQSASYQDRR. Residues 75-89 show a composition bias toward polar residues; sequence SKSLHLSPQEQSASY. K253 is covalently cross-linked (Glycyl lysine isopeptide (Lys-Gly) (interchain with G-Cter in SUMO2)). A Phosphoserine modification is found at S331.

As to quaternary structure, component of the MIS12 complex composed of MIS12, DSN1, NSL1 and PMF1. Also interacts with KNL1, CBX3 and CBX5. Interacts with KNSTRN.

It is found in the nucleus. The protein resides in the chromosome. It localises to the centromere. The protein localises to the kinetochore. In terms of biological role, part of the MIS12 complex which is required for normal chromosome alignment and segregation and kinetochore formation during mitosis. The sequence is that of Kinetochore-associated protein DSN1 homolog (DSN1) from Homo sapiens (Human).